The primary structure comprises 469 residues: Argininosuccinate lyase (469 aa).

The protein belongs to the lyase 1 family. Argininosuccinate lyase subfamily.

The protein resides in the cytoplasm. It catalyses the reaction 2-(N(omega)-L-arginino)succinate = fumarate + L-arginine. It participates in amino-acid biosynthesis; L-arginine biosynthesis; L-arginine from L-ornithine and carbamoyl phosphate: step 3/3. The protein is Argininosuccinate lyase of Paracoccus denitrificans (strain Pd 1222).